The following is a 445-amino-acid chain: Phosphoglucosamine mutase (445 aa).

The active-site Phosphoserine intermediate is the Ser102. Mg(2+)-binding residues include Ser102, Asp241, Asp243, and Asp245. A Phosphoserine modification is found at Ser102.

The protein belongs to the phosphohexose mutase family. Mg(2+) is required as a cofactor. In terms of processing, activated by phosphorylation.

The catalysed reaction is alpha-D-glucosamine 1-phosphate = D-glucosamine 6-phosphate. Functionally, catalyzes the conversion of glucosamine-6-phosphate to glucosamine-1-phosphate. The sequence is that of Phosphoglucosamine mutase from Shigella flexneri serotype 5b (strain 8401).